Reading from the N-terminus, the 199-residue chain is B3 domain-containing protein Os06g0107800 (199 aa).

Residues 13–32 (QLQGGGGGHGGGGGGGGGER) form a disordered region. Residues 15–29 (QGGGGGHGGGGGGGG) are compositionally biased toward gly residues. The segment at residues 37-141 (FEKVVTPSDV…RLFIDCRKRA (105 aa)) is a DNA-binding region (TF-B3).

It is found in the nucleus. The protein is B3 domain-containing protein Os06g0107800 of Oryza sativa subsp. japonica (Rice).